A 276-amino-acid polypeptide reads, in one-letter code: Ice-binding protein (276 aa).

The signal sequence occupies residues 1–24; that stretch reads MKILKRIPVLAVLLVGLMTNCSND. Residues 79 to 82 carry the Ice-binding site motif (T-A/G-X-T/N) 1 motif; the sequence is TGIT. The cysteines at positions 107 and 124 are disulfide-linked. 2 short sequence motifs (ice-binding site motif (T-A/G-X-T/N)) span residues 245–248 and 263–266; these read TGIN and TAVT.

Belongs to the ice-binding protein family. As to quaternary structure, monomer.

It is found in the secreted. Functionally, has antifreeze activity for survival in a subzero environment. Binds to the surface of ice crystals and inhibits their growth. Has high thermal hysteresis (TH) activity, which is the ability to lower the freezing point of an aqueous solution below its melting point, and thus the freezing of the cell fluid can be prevented protecting the organism from ice damage. The TH activity of this protein is 2.2 degrees Celsius at 5 uM and 2.5 degrees Celsius at 50 uM. The sequence is that of Ice-binding protein from Flavobacterium frigoris (strain PS1).